The sequence spans 361 residues: Tetrathionate reductase subunit C (361 aa).

Helical transmembrane passes span 26-46 (FSYA…LALL), 53-73 (AIPM…LGPL), 104-124 (ALYG…FALL), 160-180 (LAAI…MLFF), 193-213 (LMLP…ALIL), 233-253 (GAAA…WGMW), 258-278 (FAAV…TFIL), 288-308 (ITPI…WNLI), and 334-354 (AVSP…IFPM).

Belongs to the NrfD family. As to quaternary structure, probably composed of three subunits: TtrA, TtrB and TtrC.

The protein resides in the cell membrane. Its function is as follows. Part of a membrane-bound tetrathionate reductase that catalyzes the reduction of tetrathionate to thiosulfate. TtrC probably anchors TtrA and TtrB to the external face of the cytoplasmic membrane. May transfer electrons from membrane quinol to TtrB. The chain is Tetrathionate reductase subunit C (ttrC) from Archaeoglobus fulgidus (strain ATCC 49558 / DSM 4304 / JCM 9628 / NBRC 100126 / VC-16).